The sequence spans 384 residues: F-box A protein 224 (384 aa).

Positions proline 71–lysine 122 constitute an F-box domain.

Belongs to the FTH family.

This chain is F-box A protein 224 (fbxa-224), found in Caenorhabditis elegans.